We begin with the raw amino-acid sequence, 536 residues long: Protein scd2/ral3 (536 aa).

Residues 24–86 enclose the SH3 1 domain; the sequence is PPRKVIRALY…PVSHFEEIGK (63 aa). The interval 88–115 is disordered; the sequence is VKSERDSDGSGQISFTDLTTNSSTTRSS. A compositionally biased stretch (low complexity) spans 101–115; the sequence is SFTDLTTNSSTTRSS. The SH3 2 domain occupies 123-185; sequence SQPLFGIVQF…PLSFIQLRDL (63 aa). The PX domain occupies 293–413; it reads SSEPTVVAAM…LFFLPLDGDV (121 aa). In terms of domain architecture, PB1 spans 459–533; sequence TCKVKVRLGD…ESGVLLFAER (75 aa).

Scd1, scd2, cdc42, and ras1, in its GTP-bound state, act cooperatively to form a protein complex.

In terms of biological role, required for mating and morphogenesis. Interacts directly with scd1 and with cdc42. May bridge and facilitate scd1 and cdc42 interactions. The chain is Protein scd2/ral3 (scd2) from Schizosaccharomyces pombe (strain 972 / ATCC 24843) (Fission yeast).